The primary structure comprises 89 residues: Large ribosomal subunit protein bL27 (89 aa).

A disordered region spans residues 1–21; that stretch reads MAHKKAGGSSRNGRDSESKRL.

This sequence belongs to the bacterial ribosomal protein bL27 family.

The protein is Large ribosomal subunit protein bL27 of Brucella anthropi (strain ATCC 49188 / DSM 6882 / CCUG 24695 / JCM 21032 / LMG 3331 / NBRC 15819 / NCTC 12168 / Alc 37) (Ochrobactrum anthropi).